A 2057-amino-acid polypeptide reads, in one-letter code: MRNQFPFRSVYYKIINSVLAAGLYYGFLSAFSIKTSHLLLLRTLVFEEEEETKKRIVAKTGLIMGQILLFISIYYKPFHIALTRPRTITALGFFYLFFQIFWKSQKRVFANQNSMSNLSCIFLNHLILQQLLNTCILPSSAARRLVSIYTFRSNNKMLFVTSSFFAWFIGQILVCEFFELAGKHIRIELAGKHIGKNRSIRSIIRSDYFHFFFVILFFMMSLHSFGRIPSPILLPKMSNLSQIEKRALILKGTDEEEENDKIDEEIEQEMEKLEQEIEEIEQQRKLANHLKKKKDRQKKQGTRGHSDKEFHSNSNTSYSKRKIEVLKSEIRVIQEKERKSLISPLLFDYRRWYRPFRYIQNNRLEQAIRNEMSQYFFDTQQSDGKERISFTYPRSLSTFFKVIKRKINILLEKTLSNQLDNAWVSRNKKKMNHLKNDFFNRINHLDKEKIDGEIEQEKEREQKAVEILETRTRLCIEDDTTKQEYYLPQMYDPFLNGPYRGKIKKELPPSIIKNTLIADSRETGEQNRLHDLLLPNSNYENFDQNTNTLEIGDILEIDAFSSIVIHKISKKVPRWSYKLISELEQLSFHYSPPAEHEIRSRRAVGEYLLFDPTETHTTTKATDKETKPNASKETDTVNKETKPNASKETDTIDKETKTNASKETNTVDKETKTNASKETDTVDKETKPNASKETDTIDKETKTNASKETNTVNKETKPNASKETDTVDKETKTNASKETDTVNKETKTNASKETDTVDKETKPNASKETDTVNKETKTNASKETDTVNKETKTKTPEEEAKEDEEKGLVLMRYAHQPDFKHGLIKGSMRTQRRKIVIEKLFQANAHSPLFFDRIKKKKLFSFAIPRPVQLNRIFRNWSAGKGFRILESTDEQTKREEKPKRESKKKNDRVKEKKRLEIGETWDTFEITQMLRGCILIAQSSLRKNLILPSLIIGKNLGRMLLLQIPEWSEDFEEWNREKHIKCTYTGNPVSETEFPENWLTQGIQIKIVYPFHLKPWHTSKPLTSRDDVCFLTIFGRETELPFGSPRKTPSFFEPILKELEKKIGKYEKVTAESVLKKIIIKLFKKVSKETRTTNQNLPFIEKDLSKGKPILLFRSREIGGMEKEKDSRISNQIIDESFSQIQKIQIPDWTNSSLIETKMQDMTDRTSTIKNQIERITEEKKKVTLELDISTYKKSCRLELSKKIWQIVKLKNIICKFHYFRKFFIQRIYNDICLSTIHICQTNTQLFVESTKNLIEKYISKNETNKKIINKKTKNTIHFISNIKTYTYNSCKKNSEIFCDLSNLSQAYVFYKISQTGVVNLSKLRSVLQHHGTSFFLKTQMKDSFRTQGIFQSEVIHKKLQRSITSQWKNWLRGNYQYDLSQIIWSSLMSQKQKWRNRVNRYCRSQKKDLKKWNSCGKYQLSHYKKKKGPNSLSNQKDNFQKCYRYDLLSYKSINNENKGDSVFYRSIPQVTKRQAVSDNYNMSQNSLFAITGSIPINIFIGRIERVYIPYIEKNLNRKYFNWENIYFDLRKKVAIESWVAVNPSSNQKTRIGTNNFQLIDPIDKEEEEEINPSSNQKTPIGTNKDEIFYAIDKEEEEEINPEEEINPEEEINPEEEINPSSNQKTPIGTNNDQLIDPIEKQEKDPFYIPINQNPEINQPNSPNSFFDWMGMNEQILNRPISNLELWFFPEFVRLFNVYKTKPWIIPSKLLLLNSNLSETDNKKKNIAENQNLEEEDSAKSDMKKGTKKSKTNSEKKSKTNSEKKSETDSEKKSETDSEKKSETDSEKKSETDSEKKSETDSEKKSETDSEKKSLSTRELRELFMKKYFLLQLRWDQRNIGQNIRKNVRILALPKSSINLETMTLSCIERRKLQLNVMWKSKSNLSILKFFKSIGMVVDRLGLSVKNNGQFLMYQTIGISLVHKSKNKTNQQYRKQRIIRARENNHFDALVLENILSSRRRRELRILICFNSNNWNDVDTNSVFFNENGVKNCSHFWEERNLRDKEKNELIQFKFFLWPNYRLEDLACMNRYWFDTNNGSRFSILRIHMYLPLKIR.

4 helical membrane-spanning segments follow: residues 13–33 (KIIN…AFSI), 62–82 (LIMG…HIAL), 158–178 (LFVT…CEFF), and 206–226 (SDYF…HSFG). Positions 248–340 (LILKGTDEEE…RVIQEKERKS (93 aa)) form a coiled coil. The span at 288 to 302 (NHLKKKKDRQKKQGT) shows a compositional bias: basic residues. 5 disordered regions span residues 288 to 316 (NHLK…NSNT), 614 to 807 (ETHT…EEKG), 890 to 910 (DEQT…NDRV), 1597 to 1634 (EEEE…TNND), and 1724 to 1817 (KKKN…KSLS). Composition is skewed to basic and acidic residues over residues 621-657 (ATDK…KETK) and 665-702 (NTVD…KETK). The span at 704–713 (NASKETNTVN) shows a compositional bias: polar residues. Composition is skewed to basic and acidic residues over residues 714–807 (KETK…EEKG) and 891–900 (EQTKREEKPK). Acidic residues predominate over residues 1597 to 1619 (EEEEINPEEEINPEEEINPEEEI). The segment covering 1622–1634 (SSNQKTPIGTNND) has biased composition (polar residues). A compositionally biased stretch (basic and acidic residues) spans 1753-1817 (TNSEKKSKTN…ETDSEKKSLS (65 aa)).

Belongs to the TIC214 family. As to quaternary structure, part of the Tic complex.

It is found in the plastid. The protein localises to the chloroplast inner membrane. Functionally, involved in protein precursor import into chloroplasts. May be part of an intermediate translocation complex acting as a protein-conducting channel at the inner envelope. In Ipomoea purpurea (Common morning glory), this protein is Protein TIC 214.